A 1007-amino-acid polypeptide reads, in one-letter code: Serine/threonine-protein kinase PRP4 homolog (1007 aa).

The segment at 1-104 (MAATEPPSLR…PAKRTKLDDL (104 aa)) is disordered. Alanine 2 carries the post-translational modification N-acetylalanine. Serine 8, serine 21, serine 24, and serine 33 each carry phosphoserine. 2 stretches are compositionally biased toward basic residues: residues 40–60 (KHSRHKKKKHKHRSKHKKHKH) and 68–82 (KKHKHKHKHKKHKRK). Basic and acidic residues predominate over residues 83-92 (EVLDASDKEG). A phosphoserine mark is found at serine 88 and serine 94. Lysine 100 carries the N6-acetyllysine; alternate modification. Lysine 100 is covalently cross-linked (Glycyl lysine isopeptide (Lys-Gly) (interchain with G-Cter in SUMO2); alternate). A Glycyl lysine isopeptide (Lys-Gly) (interchain with G-Cter in SUMO2) cross-link involves residue lysine 112. Lysine 118 is covalently cross-linked (Glycyl lysine isopeptide (Lys-Gly) (interchain with G-Cter in SUMO2); alternate). A Glycyl lysine isopeptide (Lys-Gly) (interchain with G-Cter in SUMO1); alternate cross-link involves residue lysine 118. Serine 132 is subject to Phosphoserine. The residue at position 141 (tyrosine 141) is a Phosphotyrosine. Disordered regions lie at residues 141-535 (YESG…EDEE) and 560-583 (NISVPSEPSSPQSSTRSRSPSPDD). 3 positions are modified to phosphoserine: serine 143, serine 145, and serine 167. Low complexity predominate over residues 158 to 169 (GNRSSTRSSSTR). Residues lysine 171 and lysine 178 each participate in a glycyl lysine isopeptide (Lys-Gly) (interchain with G-Cter in SUMO2) cross-link. 2 stretches are compositionally biased toward basic residues: residues 180–203 (SAKKRSKSRSKERTRHRSDKRKSK) and 215–231 (RSKSKERRKSKSPSKRS). Phosphoserine occurs at positions 240, 242, 258, 278, 292, and 294. The span at 248 to 271 (RSQEKVGKARSPADEKIKSEEKGK) shows a compositional bias: basic and acidic residues. Over residues 294–303 (SPVDLRDKSK) the composition is skewed to basic and acidic residues. The segment covering 304 to 315 (DRRSRSKERKSK) has biased composition (basic residues). The span at 316–325 (RSEIDKEKKP) shows a compositional bias: basic and acidic residues. 5 positions are modified to phosphoserine: serine 328, serine 354, serine 356, serine 366, and serine 368. The span at 342–367 (PSRRPGRSPKRRSLSPKQRDKSRRSR) shows a compositional bias: basic residues. Position 385 is a phosphothreonine (threonine 385). Serine 387 bears the Phosphoserine mark. Composition is skewed to basic and acidic residues over residues 395–408 (RSLERKRREPERRR) and 415–429 (RPRDDILGRCERSKD). Serine 427, serine 431, and serine 437 each carry phosphoserine. Residues 438–497 (PSRRRSRSPIRRRSRSPLRRSRSPRRRSRSPRRRDRSRRSRSRLRRRSRSRGGHRRRSRS) are compositionally biased toward basic residues. 8 positions are modified to phosphoserine: serine 518, serine 519, serine 520, serine 565, serine 569, serine 576, serine 578, and serine 580. Residues 518–535 (SSSDDNLEDFDVEEEDEE) show a composition bias toward acidic residues. The span at 562–581 (SVPSEPSSPQSSTRSRSPSP) shows a compositional bias: low complexity. Glycyl lysine isopeptide (Lys-Gly) (interchain with G-Cter in SUMO2) cross-links involve residues lysine 593 and lysine 659. The Protein kinase domain occupies 687 to 1003 (YNVYGYTGQG…INQALQHAFI (317 aa)). Residues 693 to 701 (TGQGVFSNV) and lysine 717 contribute to the ATP site. An N6-acetyllysine modification is found at lysine 717. Residue aspartate 815 is the Proton acceptor of the active site. Position 849 is a phosphotyrosine (tyrosine 849). Serine 852 is subject to Phosphoserine.

It belongs to the protein kinase superfamily. CMGC Ser/Thr protein kinase family. Interacts with CLK1 C-terminus. Associates with the U5 snRNP and NCOR1 deacetylase complexes. Identified in the spliceosome C complex. Post-translationally, phosphorylated by CLK1. Autophosphorylated; phosphorylation inhibits interaction with its targets, such as PRPF6 or SMARCA4.

The protein localises to the nucleus. It is found in the chromosome. The protein resides in the centromere. It localises to the kinetochore. It catalyses the reaction L-seryl-[protein] + ATP = O-phospho-L-seryl-[protein] + ADP + H(+). The catalysed reaction is L-threonyl-[protein] + ATP = O-phospho-L-threonyl-[protein] + ADP + H(+). In terms of biological role, serine/threonine kinase involved in spliceosomal assembly as well as mitosis and signaling regulation. Connects chromatin mediated regulation of transcription and pre-mRNA splicing. During spliceosomal assembly, interacts with and phosphorylates PRPF6 and PRPF31, components of the U4/U6-U5 tri-small nuclear ribonucleoprotein (snRNP), to facilitate the formation of the spliceosome B complex. Plays a role in regulating transcription and the spindle assembly checkpoint (SAC). Associates with U5 snRNP and NCOR1 deacetylase complexes which may allow a coordination of pre-mRNA splicing with chromatin remodeling events involved in transcriptional regulation. Associates and probably phosphorylates SMARCA4 and NCOR1. Phosphorylates SRSF1. Associates with kinetochores during mitosis and is necessary for recruitment and maintenance of the checkpoint proteins such as MAD1L1 and MAD12L1 at the kinetochores. Phosphorylates and regulates the activity of the transcription factors such as ELK1 and KLF13. Phosphorylates nuclear YAP1 and WWTR1/TAZ which induces nuclear exclusion and regulates Hippo signaling pathway, involved in tissue growth control. The chain is Serine/threonine-protein kinase PRP4 homolog (Prp4k) from Rattus norvegicus (Rat).